A 506-amino-acid polypeptide reads, in one-letter code: UDP-glycosyltransferase eriJ (506 aa).

Belongs to the UDP-glycosyltransferase family.

The catalysed reaction is 11-O-acetylcyathatriol + UDP-alpha-D-xylose = erinacine Q + UDP + H(+). It catalyses the reaction 11-O-acetylcyathatriol + UDP-alpha-D-glucose = erinacine Q2 + UDP + H(+). The protein operates within secondary metabolite biosynthesis. UDP-glycosyltransferase; part of the gene cluster that mediates the biosynthesis of erinacines, cyathane-xylosides that show unique biological activities, including leishmanicidal activity, stimulating activity for nerve growth-factor synthesis, and agonistic activity toward the kappa opioid receptor. Within the pathway, eriJ tranfers xylose from UDP-xylose onto C-14 of 11-O-acetyl-cyathatriol to form eracine Q, and, at a lower rate, glucose from UDP-D-glucose to produce eracine Q2. The first step of the erinacines biosynthesis pathway is catalyzed by the geranylgeranyl diphosphate (GGPP) synthase eriE via conversion of farnesyl pyrophosphate and isopentyl pyrophosphate into geranylgeranyl pyrophosphate (GGPP). GGPP is then substrate of the diterpene cyclase eriG for the production of cyatha-3,12-diene. The cytochrome P450 monooxygenase eriI then hydroxylates cyatha-3,12-diene at C-14 of the seven-membered ring to produce erinacol, which is further hydroxylated at C-15 by the cytochrome P450 monooxygenase eriC to yield cyathadiol. The cytochrome P450 monooxygenase eriA then catalyzes C-11 hydroxylation in the presence of the short chain dehydrogenase/reductase (SDR) eriH, which leads to the production of cyathatriol. The acetyltransferase eriL converts cyathatriol into 11-O-acetyl-cyathatriol. The SDR eriH catalyzes further oxidation of 11-O-acetyl-cyathatriol into 1-O-acetylcyathin A3. Finally, the glycosyl transferase eriJ tranfers xylose from UDP-xylose onto C-14 of 11-O-acetyl-cyathatriol to form eracine Q. EriJ is also able to convert 11-O-acetyl-cyathatriol to eracine Q2 by using UDP-D-glucose as cosubstrate, but at a lower rate. The chain is UDP-glycosyltransferase eriJ from Hericium erinaceus (Lion's mane mushroom).